Consider the following 379-residue polypeptide: Transcription termination factor 1b, mitochondrial (379 aa).

Residues 1 to 37 (MASRNIWCVRRNFLFDLRGWMLQYSAEVFLKSISFRT) constitute a mitochondrion transit peptide. Interaction with DNA stretches follow at residues 151–152 (RS), 229–233 (QSTKR), 306–313 (SEKKFNDK), 337–340 (SINT), and 366–373 (SQRRYEAK).

The protein belongs to the mTERF family. In terms of assembly, monomer. In terms of processing, phosphoprotein with mostly four phosphate groups. While the DNA-binding activity is unaffected by the phosphorylation state, only the phosphorylated form of the protein is active for termination activity. Functioning seems to be regulated by phosphorylation. As to expression, expressed strongly in the heart and at lower levels in brain, liver and kidney.

It localises to the mitochondrion. Its function is as follows. Transcription termination factor. Binds to a 28 bp region within the tRNA(Leu(uur)) gene at a position immediately adjacent to and downstream of the 16S rRNA gene; this region comprises a tridecamer sequence critical for directing accurate termination. Binds DNA along the major grove and promotes DNA bending and partial unwinding. Promotes base flipping. Transcription termination activity appears to be polarized with highest specificity for transcripts initiated on the light strand. The chain is Transcription termination factor 1b, mitochondrial from Mus musculus (Mouse).